A 442-amino-acid chain; its full sequence is UDP-N-acetylglucosamine 1-carboxyvinyltransferase (442 aa).

22-23 is a binding site for phosphoenolpyruvate; that stretch reads KN. Position 94 (Arg-94) interacts with UDP-N-acetyl-alpha-D-glucosamine. Asp-119 (proton donor) is an active-site residue. UDP-N-acetyl-alpha-D-glucosamine-binding residues include Asp-309 and Val-331.

It belongs to the EPSP synthase family. MurA subfamily.

It is found in the cytoplasm. It carries out the reaction phosphoenolpyruvate + UDP-N-acetyl-alpha-D-glucosamine = UDP-N-acetyl-3-O-(1-carboxyvinyl)-alpha-D-glucosamine + phosphate. The protein operates within cell wall biogenesis; peptidoglycan biosynthesis. In terms of biological role, cell wall formation. Adds enolpyruvyl to UDP-N-acetylglucosamine. This chain is UDP-N-acetylglucosamine 1-carboxyvinyltransferase, found in Chlamydia muridarum (strain MoPn / Nigg).